Reading from the N-terminus, the 365-residue chain is Cobalt-precorrin-5B C(1)-methyltransferase (365 aa).

The protein belongs to the CbiD family.

It catalyses the reaction Co-precorrin-5B + S-adenosyl-L-methionine = Co-precorrin-6A + S-adenosyl-L-homocysteine. It functions in the pathway cofactor biosynthesis; adenosylcobalamin biosynthesis; cob(II)yrinate a,c-diamide from sirohydrochlorin (anaerobic route): step 6/10. Functionally, catalyzes the methylation of C-1 in cobalt-precorrin-5B to form cobalt-precorrin-6A. The chain is Cobalt-precorrin-5B C(1)-methyltransferase from Methanococcus maripaludis (strain C6 / ATCC BAA-1332).